Reading from the N-terminus, the 291-residue chain is Transcription initiation factor IIE subunit beta (291 aa).

At Met1 the chain carries N-acetylmethionine. Basic and acidic residues predominate over residues 1–13; the sequence is MDPSLLRERELFK. The disordered stretch occupies residues 1–63; that stretch reads MDPSLLRERE…NSDHSNGSFN (63 aa). The segment covering 50–62 has biased composition (polar residues); that stretch reads GSKQNSDHSNGSF. The residue at position 61 (Ser61) is a Phosphoserine. Positions 66 to 146 form a DNA-binding region, TFIIE beta; that stretch reads ALSGSSGYKF…YAFKPKYNVR (81 aa). An N6-acetyllysine modification is found at Lys74. The interval 243-272 is disordered; sequence SSMQESGPKKVAPIQRRKKPASQKKRRFKT. The segment covering 257 to 271 has biased composition (basic residues); the sequence is QRRKKPASQKKRRFK.

This sequence belongs to the TFIIE beta subunit family. As to quaternary structure, tetramer of two alpha and two beta chains. Interacts with FACT subunit SUPT16H. Interacts with ATF7IP. Interacts with SND1. Part of TBP-based Pol II pre-initiation complex (PIC), in which Pol II core assembles with general transcription factors and other specific initiation factors including GTF2E1, GTF2E2, GTF2F1, GTF2F2, TCEA1, ERCC2, ERCC3, GTF2H2, GTF2H3, GTF2H4, GTF2H5, GTF2A1, GTF2A2, GTF2B and TBP; this large multi-subunit PIC complex mediates DNA unwinding and targets Pol II core to the transcription start site where the first phosphodiester bond forms.

It localises to the nucleus. In terms of biological role, recruits TFIIH to the initiation complex and stimulates the RNA polymerase II C-terminal domain kinase and DNA-dependent ATPase activities of TFIIH. Both TFIIH and TFIIE are required for promoter clearance by RNA polymerase. This is Transcription initiation factor IIE subunit beta (GTF2E2) from Homo sapiens (Human).